A 120-amino-acid polypeptide reads, in one-letter code: NAD(P)H-quinone oxidoreductase subunit 3, chloroplastic (120 aa).

Transmembrane regions (helical) follow at residues 9–29, 64–84, and 88–108; these read IFWA…LISG, MFAL…PWAM, and VLGL…IVGS.

Belongs to the complex I subunit 3 family. In terms of assembly, NDH is composed of at least 16 different subunits, 5 of which are encoded in the nucleus.

It is found in the plastid. The protein localises to the chloroplast thylakoid membrane. It carries out the reaction a plastoquinone + NADH + (n+1) H(+)(in) = a plastoquinol + NAD(+) + n H(+)(out). The enzyme catalyses a plastoquinone + NADPH + (n+1) H(+)(in) = a plastoquinol + NADP(+) + n H(+)(out). Functionally, NDH shuttles electrons from NAD(P)H:plastoquinone, via FMN and iron-sulfur (Fe-S) centers, to quinones in the photosynthetic chain and possibly in a chloroplast respiratory chain. The immediate electron acceptor for the enzyme in this species is believed to be plastoquinone. Couples the redox reaction to proton translocation, and thus conserves the redox energy in a proton gradient. The sequence is that of NAD(P)H-quinone oxidoreductase subunit 3, chloroplastic from Manihot esculenta (Cassava).